Here is a 104-residue protein sequence, read N- to C-terminus: uncharacterized protein (104 aa).

Transmembrane regions (helical) follow at residues 16–36 (LAFF…LASY) and 44–64 (GGFG…FLCI).

It is found in the cell membrane. This is an uncharacterized protein from Bacillus anthracis.